Here is a 104-residue protein sequence, read N- to C-terminus: Large ribosomal subunit protein bL21 (104 aa).

The protein belongs to the bacterial ribosomal protein bL21 family. As to quaternary structure, part of the 50S ribosomal subunit. Contacts protein L20.

In terms of biological role, this protein binds to 23S rRNA in the presence of protein L20. This is Large ribosomal subunit protein bL21 from Azobacteroides pseudotrichonymphae genomovar. CFP2.